The chain runs to 158 residues: uncharacterized protein (158 aa).

This is an uncharacterized protein from Methanocaldococcus jannaschii (strain ATCC 43067 / DSM 2661 / JAL-1 / JCM 10045 / NBRC 100440) (Methanococcus jannaschii).